Reading from the N-terminus, the 912-residue chain is Protein translocase subunit SecA (912 aa).

ATP-binding positions include Q87, 105-109, and D499; that span reads GEGKT. Zn(2+) is bound by residues C897, C899, C908, and H909.

This sequence belongs to the SecA family. As to quaternary structure, monomer and homodimer. Part of the essential Sec protein translocation apparatus which comprises SecA, SecYEG and auxiliary proteins SecDF-YajC and YidC. Requires Zn(2+) as cofactor.

It is found in the cell inner membrane. Its subcellular location is the cytoplasm. It catalyses the reaction ATP + H2O + cellular proteinSide 1 = ADP + phosphate + cellular proteinSide 2.. Part of the Sec protein translocase complex. Interacts with the SecYEG preprotein conducting channel. Has a central role in coupling the hydrolysis of ATP to the transfer of proteins into and across the cell membrane, serving both as a receptor for the preprotein-SecB complex and as an ATP-driven molecular motor driving the stepwise translocation of polypeptide chains across the membrane. The polypeptide is Protein translocase subunit SecA (Rhizorhabdus wittichii (strain DSM 6014 / CCUG 31198 / JCM 15750 / NBRC 105917 / EY 4224 / RW1) (Sphingomonas wittichii)).